Here is a 309-residue protein sequence, read N- to C-terminus: DnaJ homolog subfamily B member 7 (309 aa).

Residues Asp-3–Gly-69 form the J domain. The disordered stretch occupies residues Phe-282–Cys-309. Positions Gly-290 to Cys-309 are enriched in basic residues.

In terms of biological role, probably acts as a co-chaperone. This is DnaJ homolog subfamily B member 7 (DNAJB7) from Homo sapiens (Human).